A 293-amino-acid chain; its full sequence is Elongation factor Ts (293 aa).

The segment at 81–84 is involved in Mg(2+) ion dislocation from EF-Tu; it reads TDFV.

Belongs to the EF-Ts family.

It localises to the cytoplasm. Associates with the EF-Tu.GDP complex and induces the exchange of GDP to GTP. It remains bound to the aminoacyl-tRNA.EF-Tu.GTP complex up to the GTP hydrolysis stage on the ribosome. The protein is Elongation factor Ts of Teredinibacter turnerae (strain ATCC 39867 / T7901).